The sequence spans 559 residues: Apolipoprotein N-acyltransferase 2 (559 aa).

A run of 6 helical transmembrane segments spans residues 27–47, 53–73, 86–106, 114–134, 153–173, and 187–207; these read LAGS…GFLL, HVAC…SFWL, ASTV…ACIL, ACAF…GILA, IADI…NACV, and VPVF…SLYG. Positions 221-507 constitute a CN hydrolase domain; the sequence is LALAIVQQNA…SAVLHVPVYP (287 aa). Catalysis depends on glutamate 288, which acts as the Proton acceptor. Lysine 358 is a catalytic residue. Catalysis depends on cysteine 416, which acts as the Nucleophile. A helical membrane pass occupies residues 519–539; it reads WVIVLCALIFFAEGVRMAVHT.

The protein belongs to the CN hydrolase family. Apolipoprotein N-acyltransferase subfamily.

It is found in the cell inner membrane. It catalyses the reaction N-terminal S-1,2-diacyl-sn-glyceryl-L-cysteinyl-[lipoprotein] + a glycerophospholipid = N-acyl-S-1,2-diacyl-sn-glyceryl-L-cysteinyl-[lipoprotein] + a 2-acyl-sn-glycero-3-phospholipid + H(+). The protein operates within protein modification; lipoprotein biosynthesis (N-acyl transfer). Catalyzes the phospholipid dependent N-acylation of the N-terminal cysteine of apolipoprotein, the last step in lipoprotein maturation. This Treponema pallidum (strain Nichols) protein is Apolipoprotein N-acyltransferase 2.